The following is a 119-amino-acid chain: Large ribosomal subunit protein uL18 (119 aa).

Belongs to the universal ribosomal protein uL18 family. As to quaternary structure, part of the 50S ribosomal subunit; part of the 5S rRNA/L5/L18/L25 subcomplex. Contacts the 5S and 23S rRNAs.

This is one of the proteins that bind and probably mediate the attachment of the 5S RNA into the large ribosomal subunit, where it forms part of the central protuberance. This Anaeromyxobacter dehalogenans (strain 2CP-1 / ATCC BAA-258) protein is Large ribosomal subunit protein uL18.